A 550-amino-acid polypeptide reads, in one-letter code: Urocanate hydratase (550 aa).

NAD(+) is bound by residues 48–49 (GG), Gln126, 172–174 (GMG), Glu192, Arg197, 238–239 (NA), 259–263 (QTSAH), 268–269 (YL), and Tyr317. Cys405 is a catalytic residue. NAD(+) is bound at residue Gly487.

It belongs to the urocanase family. NAD(+) is required as a cofactor.

It localises to the cytoplasm. It catalyses the reaction 4-imidazolone-5-propanoate = trans-urocanate + H2O. It participates in amino-acid degradation; L-histidine degradation into L-glutamate; N-formimidoyl-L-glutamate from L-histidine: step 2/3. Its function is as follows. Catalyzes the conversion of urocanate to 4-imidazolone-5-propionate. The chain is Urocanate hydratase from Saccharopolyspora erythraea (strain ATCC 11635 / DSM 40517 / JCM 4748 / NBRC 13426 / NCIMB 8594 / NRRL 2338).